A 502-amino-acid polypeptide reads, in one-letter code: Inosine-5'-monophosphate dehydrogenase 2 (502 aa).

Ser2 is modified (N-acetylserine). Residues 166–225 form the CBS domain; that stretch reads MKSCENKDYYVPWDIDLDKIEAVLEDKQKGFVVLEKEGETVNVVTKDDVERVKGYPKLGS. NAD(+) is bound by residues 264–266 and 314–316; these read DSS and GMG. Positions 316 and 318 each coordinate K(+). Residue Ser319 participates in IMP binding. Cys321 serves as a coordination point for K(+). The active-site Thioimidate intermediate is Cys321. IMP is bound by residues 354–356, 377–378, and 401–405; these read DGG, GS, and YRGMG. The active-site Proton acceptor is Arg417. Gln429 contacts IMP. K(+)-binding residues include Glu488, Gly489, and Gly490.

It belongs to the IMPDH/GMPR family. Homotetramer. Requires K(+) as cofactor.

The protein resides in the cytoplasm. The enzyme catalyses IMP + NAD(+) + H2O = XMP + NADH + H(+). It participates in purine metabolism; XMP biosynthesis via de novo pathway; XMP from IMP: step 1/1. Mycophenolic acid (MPA) is a non-competitive inhibitor that prevents formation of the closed enzyme conformation by binding to the same site as the amobile flap. In contrast, mizoribine monophosphate (MZP) is a competitive inhibitor that induces the closed conformation. MPA is a potent inhibitor of mammalian IMPDHs but a poor inhibitor of the bacterial enzymes. MZP is a more potent inhibitor of bacterial IMPDH. Its function is as follows. Catalyzes the conversion of inosine 5'-phosphate (IMP) to xanthosine 5'-phosphate (XMP), the first committed and rate-limiting step in the de novo synthesis of guanine nucleotides, and therefore plays an important role in the regulation of cell growth. This Arabidopsis thaliana (Mouse-ear cress) protein is Inosine-5'-monophosphate dehydrogenase 2.